Reading from the N-terminus, the 694-residue chain is Elongation factor G (694 aa).

The tr-type G domain occupies 8–287; the sequence is EDYRNFGIMA…AVVSYLPSPI (280 aa). GTP is bound by residues 17 to 24, 86 to 90, and 140 to 143; these read AHIDAGKT, DTPGH, and NKMD.

The protein belongs to the TRAFAC class translation factor GTPase superfamily. Classic translation factor GTPase family. EF-G/EF-2 subfamily.

The protein localises to the cytoplasm. Catalyzes the GTP-dependent ribosomal translocation step during translation elongation. During this step, the ribosome changes from the pre-translocational (PRE) to the post-translocational (POST) state as the newly formed A-site-bound peptidyl-tRNA and P-site-bound deacylated tRNA move to the P and E sites, respectively. Catalyzes the coordinated movement of the two tRNA molecules, the mRNA and conformational changes in the ribosome. This Bartonella tribocorum (strain CIP 105476 / IBS 506) protein is Elongation factor G.